A 214-amino-acid chain; its full sequence is MSSKVTSQHAEELSTGARTLGVNLTGTQHELLLGYLALLIKWNQAYNLTAVRDPDEMVSRHLLDSLSVMSFIENGRWLDVGSGGGMPGIPLAILYPDSQVTCLDSNGKKTRFLTQVKLELKLDNLQVIHSRVEAFQPAQPFNGIISRAFSSMENFTNWTRHLGDADTRWLAMKGVHPADELVALPADFKLDSEHALAVPGCQGQRHLLILRRTA.

Residues glycine 81, methionine 86, valine 132–glutamate 133, and arginine 147 each bind S-adenosyl-L-methionine.

The protein belongs to the methyltransferase superfamily. RNA methyltransferase RsmG family.

It is found in the cytoplasm. The catalysed reaction is guanosine(527) in 16S rRNA + S-adenosyl-L-methionine = N(7)-methylguanosine(527) in 16S rRNA + S-adenosyl-L-homocysteine. Functionally, specifically methylates the N7 position of guanine in position 527 of 16S rRNA. This is Ribosomal RNA small subunit methyltransferase G from Pseudomonas fluorescens (strain Pf0-1).